Reading from the N-terminus, the 466-residue chain is Neuropeptide Y receptor type 5 (466 aa).

The Extracellular portion of the chain corresponds to 1–63 (MEVKLEEHFN…YRGSVDDLQY (63 aa)). Residues N10, N17, N38, and N39 are each glycosylated (N-linked (GlcNAc...) asparagine). A helical membrane pass occupies residues 64–84 (FLIGLYTFVSLLGFMGNLLIL). Topologically, residues 85–98 (MAVMKKRNQKTTVN) are cytoplasmic. A helical transmembrane segment spans residues 99–119 (FLIGNLAFSDILVVLFCSPFT). Over 120–138 (LTSVLLDQWMFGKAMCHIM) the chain is Extracellular. Cysteines 135 and 219 form a disulfide. A helical membrane pass occupies residues 139 to 159 (PFLQCVSVLVSTLILISIAIV). At 160 to 177 (RYHMIKHPISNNLTANHG) the chain is on the cytoplasmic side. A helical transmembrane segment spans residues 178–198 (YFLIATVWTLGFAICSPLPVF). The Extracellular portion of the chain corresponds to 199–229 (HSLVELKETFGSALLSSKYLCVESWPSDSYR). A helical membrane pass occupies residues 230 to 250 (IAFTISLLLVQYILPLVCLTV). Over 251–389 (SHTSVCRSIS…KKRSRSVFYR (139 aa)) the chain is Cytoplasmic. Positions 323 to 346 (GPSQEKHLTVPENPGSVRSQLSPS) are disordered. A helical transmembrane segment spans residues 390 to 410 (LTILILVFAVSWMPLHVFHVV). The Extracellular portion of the chain corresponds to 411–427 (TDFNDNLISNRHFKLVY). Residues 428-448 (CICHLLGMMSCCLNPILYGFL) traverse the membrane as a helical segment. Residues 449–466 (NNGIKADLRALIHCLHMS) lie on the Cytoplasmic side of the membrane. C462 carries the S-palmitoyl cysteine lipid modification.

Belongs to the G-protein coupled receptor 1 family.

The protein localises to the cell membrane. Receptor for neuropeptide Y and peptide YY. The activity of this receptor is mediated by G proteins that inhibit adenylate cyclase activity. Seems to be associated with food intake. Could be involved in feeding disorders. The polypeptide is Neuropeptide Y receptor type 5 (Npy5r) (Mus musculus (Mouse)).